A 442-amino-acid polypeptide reads, in one-letter code: Methionine aminopeptidase 2 (442 aa).

Positions 1–81 (MAAQAPTEAL…APTAQSDPPR (81 aa)) are disordered. Residues 56–72 (PLRRRRRRRRTRKKKKA) are compositionally biased toward basic residues. Histidine 196 provides a ligand contact to substrate. The a divalent metal cation site is built by aspartate 216, aspartate 227, and histidine 296. Substrate is bound at residue histidine 304. Positions 329 and 423 each coordinate a divalent metal cation.

It belongs to the peptidase M24A family. Methionine aminopeptidase eukaryotic type 2 subfamily. Co(2+) is required as a cofactor. The cofactor is Zn(2+). It depends on Mn(2+) as a cofactor. Requires Fe(2+) as cofactor.

The protein resides in the cytoplasm. It carries out the reaction Release of N-terminal amino acids, preferentially methionine, from peptides and arylamides.. In terms of biological role, cotranslationally removes the N-terminal methionine from nascent proteins. The N-terminal methionine is often cleaved when the second residue in the primary sequence is small and uncharged (Met-Ala-, Cys, Gly, Pro, Ser, Thr, or Val). The sequence is that of Methionine aminopeptidase 2 from Verticillium alfalfae (strain VaMs.102 / ATCC MYA-4576 / FGSC 10136) (Verticillium wilt of alfalfa).